The following is a 462-amino-acid chain: Syringate O-demethylase (462 aa).

It belongs to the GcvT family.

It catalyses the reaction syringate + (6S)-5,6,7,8-tetrahydrofolate = 3-O-methylgallate + (6S)-5-methyl-5,6,7,8-tetrahydrofolate. The protein operates within secondary metabolite metabolism; lignin degradation. Its function is as follows. Involved in the catabolism of syringate. Catalyzes the conversion of syringate to 3-O-methylgallate (3MGA) in the presence of tetrahydrofolate. Has weak activity with vanillate and 3-O-methylgallate. The sequence is that of Syringate O-demethylase from Sphingobium sp. (strain NBRC 103272 / SYK-6).